A 627-amino-acid chain; its full sequence is DNA mismatch repair protein MutL (627 aa).

The interval 363–397 is disordered; the sequence is FAEPAAREPVAPRYSPAPASGSRPAAPWPNAQPGY. Residues 364 to 387 are compositionally biased toward low complexity; the sequence is AEPAAREPVAPRYSPAPASGSRPA.

This sequence belongs to the DNA mismatch repair MutL/HexB family.

Functionally, this protein is involved in the repair of mismatches in DNA. It is required for dam-dependent methyl-directed DNA mismatch repair. May act as a 'molecular matchmaker', a protein that promotes the formation of a stable complex between two or more DNA-binding proteins in an ATP-dependent manner without itself being part of a final effector complex. This is DNA mismatch repair protein MutL from Shigella flexneri serotype 5b (strain 8401).